Here is a 142-residue protein sequence, read N- to C-terminus: Hemoglobin subunit zeta (142 aa).

The residue at position 2 (Ser-2) is an N-acetylserine. A Globin domain is found at 2–142 (SLMKNERAII…LSSILTEKYR (141 aa)). A Phosphothreonine modification is found at Thr-29. Ser-53 is subject to Phosphoserine. Residue His-59 coordinates heme b. Ser-73 bears the Phosphoserine mark. His-88 serves as a coordination point for heme b.

This sequence belongs to the globin family. Heterotetramer of two zeta chains and beta-type chains.

The zeta chain is an alpha-type chain of mammalian embryonic hemoglobin. The sequence is that of Hemoglobin subunit zeta (Hbz) from Mus musculus (Mouse).